Consider the following 38-residue polypeptide: MTQSNPNEQNVELNRTSLYWGLLLIFVLAVSFSNYFFN.

A helical transmembrane segment spans residues 17-37; that stretch reads SLYWGLLLIFVLAVSFSNYFF.

It belongs to the PsbL family. In terms of assembly, PSII is composed of 1 copy each of membrane proteins PsbA, PsbB, PsbC, PsbD, PsbE, PsbF, PsbH, PsbI, PsbJ, PsbK, PsbL, PsbM, PsbT, PsbX, PsbY, PsbZ, Psb30/Ycf12, at least 3 peripheral proteins of the oxygen-evolving complex and a large number of cofactors. It forms dimeric complexes.

It is found in the plastid. The protein localises to the chloroplast thylakoid membrane. Its function is as follows. One of the components of the core complex of photosystem II (PSII). PSII is a light-driven water:plastoquinone oxidoreductase that uses light energy to abstract electrons from H(2)O, generating O(2) and a proton gradient subsequently used for ATP formation. It consists of a core antenna complex that captures photons, and an electron transfer chain that converts photonic excitation into a charge separation. This subunit is found at the monomer-monomer interface and is required for correct PSII assembly and/or dimerization. The polypeptide is Photosystem II reaction center protein L (Amborella trichopoda).